The primary structure comprises 264 residues: Virulence plasmid protein pGP3-D (264 aa).

The chain is Virulence plasmid protein pGP3-D from Chlamydia psittaci (Chlamydophila psittaci).